A 313-amino-acid chain; its full sequence is Meiotically up-regulated gene 100 protein, mitochondrial (313 aa).

2 consecutive transmembrane segments (helical) span residues 147 to 167 (VFDY…YTAG) and 178 to 198 (SGFI…TLTF).

Its subcellular location is the mitochondrion inner membrane. Functionally, has a role in meiosis. In Schizosaccharomyces pombe (strain 972 / ATCC 24843) (Fission yeast), this protein is Meiotically up-regulated gene 100 protein, mitochondrial (mug100).